A 513-amino-acid chain; its full sequence is GMP synthase [glutamine-hydrolyzing] (513 aa).

One can recognise a Glutamine amidotransferase type-1 domain in the interval 9 to 198 (LILVLDFGSQ…VRRVCDCRGQ (190 aa)). The active-site Nucleophile is the C86. Catalysis depends on residues H172 and E174. Positions 199–388 (WTMENFIEIE…LGIPEHLVWR (190 aa)) constitute a GMPS ATP-PPase domain. ATP is bound at residue 226 to 232 (SGGVDSS).

As to quaternary structure, homodimer.

The enzyme catalyses XMP + L-glutamine + ATP + H2O = GMP + L-glutamate + AMP + diphosphate + 2 H(+). The protein operates within purine metabolism; GMP biosynthesis; GMP from XMP (L-Gln route): step 1/1. In terms of biological role, catalyzes the synthesis of GMP from XMP. The chain is GMP synthase [glutamine-hydrolyzing] from Staphylococcus aureus (strain USA300).